We begin with the raw amino-acid sequence, 129 residues long: Small ribosomal subunit protein uS11 (129 aa).

The protein belongs to the universal ribosomal protein uS11 family. In terms of assembly, part of the 30S ribosomal subunit. Interacts with proteins S7 and S18. Binds to IF-3.

Functionally, located on the platform of the 30S subunit, it bridges several disparate RNA helices of the 16S rRNA. Forms part of the Shine-Dalgarno cleft in the 70S ribosome. The chain is Small ribosomal subunit protein uS11 from Desulfovibrio desulfuricans (strain ATCC 27774 / DSM 6949 / MB).